Reading from the N-terminus, the 223-residue chain is Thymidine kinase (223 aa).

ATP contacts are provided by residues 19–26 and 96–99; these read GPMFAGKT and DEVQ. The active-site Proton acceptor is the E97. Residues C153, C156, C191, and H194 each coordinate Zn(2+).

The protein belongs to the thymidine kinase family. Homotetramer.

It is found in the cytoplasm. The enzyme catalyses thymidine + ATP = dTMP + ADP + H(+). In Ureaplasma parvum serovar 3 (strain ATCC 27815 / 27 / NCTC 11736), this protein is Thymidine kinase.